We begin with the raw amino-acid sequence, 184 residues long: Cell division protein ZapC (184 aa).

Belongs to the ZapC family. In terms of assembly, interacts directly with FtsZ.

The protein localises to the cytoplasm. Functionally, contributes to the efficiency of the cell division process by stabilizing the polymeric form of the cell division protein FtsZ. Acts by promoting interactions between FtsZ protofilaments and suppressing the GTPase activity of FtsZ. This chain is Cell division protein ZapC, found in Idiomarina loihiensis (strain ATCC BAA-735 / DSM 15497 / L2-TR).